Reading from the N-terminus, the 316-residue chain is Probable porphobilinogen deaminase (316 aa).

Position 234 is an S-(dipyrrolylmethanemethyl)cysteine (cysteine 234).

This sequence belongs to the HMBS family. Requires dipyrromethane as cofactor.

The enzyme catalyses 4 porphobilinogen + H2O = hydroxymethylbilane + 4 NH4(+). It participates in porphyrin-containing compound metabolism; protoporphyrin-IX biosynthesis; coproporphyrinogen-III from 5-aminolevulinate: step 2/4. Tetrapolymerization of the monopyrrole PBG into the hydroxymethylbilane pre-uroporphyrinogen in several discrete steps. This chain is Probable porphobilinogen deaminase, found in Methanosarcina barkeri (strain Fusaro / DSM 804).